Reading from the N-terminus, the 110-residue chain is Small ribosomal subunit protein uS10 (110 aa).

Belongs to the universal ribosomal protein uS10 family. As to quaternary structure, part of the 30S ribosomal subunit.

Its function is as follows. Involved in the binding of tRNA to the ribosomes. This is Small ribosomal subunit protein uS10 from Coxiella burnetii (strain Dugway 5J108-111).